The chain runs to 352 residues: C-C chemokine receptor type 5 (352 aa).

The Extracellular segment spans residues 1–30 (MDYQVSSPIYDIDYGPSEPCRKIDVKQMGA). The residue at position 3 (Tyr-3) is a Sulfotyrosine. Ser-6 and Ser-7 each carry an O-linked (GalNAc...) serine glycan. A sulfotyrosine mark is found at Tyr-10 and Tyr-14. 2 disulfides stabilise this stretch: Cys-20-Cys-269 and Cys-101-Cys-178. Residues 31 to 58 (HLLPPLYSMVFLFGFVGNMLVVLILINC) traverse the membrane as a helical segment. Over 59-68 (KRLKSMTDIY) the chain is Cytoplasmic. The helical transmembrane segment at 69–89 (LLNLAISDLIFLFTVPFWAHY) threads the bilayer. Topologically, residues 90–102 (AAGQWDFGNTMCQ) are extracellular. Residues 103-124 (FLTGLYFIGFFSGIFFIILLTI) traverse the membrane as a helical segment. The Cytoplasmic portion of the chain corresponds to 125 to 141 (DRYLAIVHAVFALKART). The helical transmembrane segment at 142–166 (VTFGVVTSVITWVVAVFASLPGIIF) threads the bilayer. Over 167 to 198 (TRSQKEGYHYTCSPHFPFSQYQFWKNFETLKM) the chain is Extracellular. A helical membrane pass occupies residues 199–218 (VILGLVLPLLVMVICYSGIL). Residues 219 to 235 (KTLLRCRNEKKRHRAVR) are Cytoplasmic-facing. A helical membrane pass occupies residues 236–260 (LIFTIMIVYFLFWAPYNIVLLLNTY). The Extracellular portion of the chain corresponds to 261–277 (QEFFGLNNCSSSNRLDQ). Residues 278 to 301 (AMQVTETLGMTHCCVNPIIYAFVG) form a helical membrane-spanning segment. The Cytoplasmic segment spans residues 302–352 (EKFRNYLKVFFQKHIAKCFCECCSIFQKEAPERANSVYTRSTGEQEISVGL). S-palmitoyl cysteine attachment occurs at residues Cys-321, Cys-323, and Cys-324. Ser-337, Ser-342, and Ser-349 each carry phosphoserine; by BARK1.

It belongs to the G-protein coupled receptor 1 family. In terms of assembly, interacts with PRAF2. Efficient ligand binding to CCL3/MIP-1alpha and CCL4/MIP-1beta requires sulfation, O-glycosylation and sialic acid modifications. Glycosylation on Ser-6 is required for efficient binding of CCL4. Interacts with GRK2. Interacts with ARRB1 and ARRB2. Interacts with CNIH4. Interacts with S100A4; this interaction stimulates T-lymphocyte chemotaxis. Sulfated on at least 2 of the N-terminal tyrosines. Sulfation is required for efficient binding of the chemokines, CCL3 and CCL4. Post-translationally, palmitoylation in the C-terminal is important for cell surface expression. In terms of processing, phosphorylation on serine residues in the C-terminal is stimulated by binding CC chemokines especially by APO-RANTES. O-glycosylated, but not N-glycosylated. Ser-6 appears to be the major site even if Ser-7 may be also O-glycosylated. Also sialylated glycans present which contribute to chemokine binding. Ser-17 may also be glycosylated and, if so, with small moieties such as a T-antigen.

The protein resides in the cell membrane. In terms of biological role, receptor for a number of inflammatory CC-chemokines including CCL3/MIP-1-alpha, CCL4/MIP-1-beta and RANTES and subsequently transduces a signal by increasing the intracellular calcium ion level. May play a role in the control of granulocytic lineage proliferation or differentiation. Participates in T-lymphocyte migration to the infection site by acting as a chemotactic receptor. In Mico humeralifer (Black and white tassel-ear marmoset), this protein is C-C chemokine receptor type 5 (CCR5).